Consider the following 537-residue polypeptide: Prolyl 4-hydroxylase subunit alpha-2 (537 aa).

The N-terminal stretch at 1 to 23 (MKLQVLVLVLLMSWFGVLSWVQA) is a signal peptide. The N-linked (GlcNAc...) asparagine glycan is linked to N117. A TPR repeat occupies 209-242 (SLVLDYLSYAVFQLGDLHRAVELTRRLLSLDPSH). Residue N266 is glycosylated (N-linked (GlcNAc...) asparagine). One can recognise a Fe2OG dioxygenase domain in the interval 414–522 (TAELLQVANY…KWVSNKWFHE (109 aa)). The Fe cation site is built by H432 and D434. K482 carries the post-translational modification N6-succinyllysine. Position 503 (H503) interacts with Fe cation. 2-oxoglutarate is bound at residue K513.

It belongs to the P4HA family. As to quaternary structure, heterotetramer of two alpha-2 chains and two beta chains (P4HB) (the beta chain is the multi-functional PDI), where P4HB plays the role of a structural subunit; this tetramer catalyzes the formation of 4-hydroxyproline in collagen. The cofactor is Fe(2+). L-ascorbate serves as cofactor. Expressed at least in brain, heart and lung.

It localises to the endoplasmic reticulum lumen. It catalyses the reaction L-prolyl-[collagen] + 2-oxoglutarate + O2 = trans-4-hydroxy-L-prolyl-[collagen] + succinate + CO2. Its activity is regulated as follows. Inhibited by poly(L-proline) only at very high concentrations. In terms of biological role, catalyzes the post-translational formation of 4-hydroxyproline in -Xaa-Pro-Gly- sequences in collagens and other proteins. The chain is Prolyl 4-hydroxylase subunit alpha-2 (P4ha2) from Mus musculus (Mouse).